Here is a 128-residue protein sequence, read N- to C-terminus: Aspartate 1-decarboxylase (128 aa).

Catalysis depends on serine 25, which acts as the Schiff-base intermediate with substrate; via pyruvic acid. Serine 25 is modified (pyruvic acid (Ser)). Threonine 57 lines the substrate pocket. Catalysis depends on tyrosine 58, which acts as the Proton donor. Residue 73 to 75 participates in substrate binding; sequence GAA.

It belongs to the PanD family. Heterooctamer of four alpha and four beta subunits. It depends on pyruvate as a cofactor. In terms of processing, is synthesized initially as an inactive proenzyme, which is activated by self-cleavage at a specific serine bond to produce a beta-subunit with a hydroxyl group at its C-terminus and an alpha-subunit with a pyruvoyl group at its N-terminus.

The protein resides in the cytoplasm. It catalyses the reaction L-aspartate + H(+) = beta-alanine + CO2. The protein operates within cofactor biosynthesis; (R)-pantothenate biosynthesis; beta-alanine from L-aspartate: step 1/1. Its function is as follows. Catalyzes the pyruvoyl-dependent decarboxylation of aspartate to produce beta-alanine. In Staphylococcus epidermidis (strain ATCC 35984 / DSM 28319 / BCRC 17069 / CCUG 31568 / BM 3577 / RP62A), this protein is Aspartate 1-decarboxylase.